The following is a 323-amino-acid chain: Serine/threonine-protein phosphatase PP1-gamma catalytic subunit B (323 aa).

Residues D64, H66, D92, and N124 each contribute to the Mn(2+) site. The Proton donor role is filled by H125. 2 residues coordinate Mn(2+): H173 and H248. The interval K301–K323 is disordered.

It belongs to the PPP phosphatase family. PP-1 subfamily. In terms of assembly, PP1 comprises a catalytic subunit, ppp1c1, ppp1cb or ppp1cc, which is folded into its native form by inhibitor 2 and glycogen synthetase kinase 3, and then is complexed to one or several targeting or regulatory subunits. Mn(2+) is required as a cofactor.

The protein localises to the cytoplasm. Its subcellular location is the nucleus. It is found in the cleavage furrow. It localises to the nucleolus. The protein resides in the nucleoplasm. The protein localises to the chromosome. Its subcellular location is the centromere. It is found in the kinetochore. It localises to the nucleus speckle. The protein resides in the midbody. The protein localises to the mitochondrion. The enzyme catalyses O-phospho-L-seryl-[protein] + H2O = L-seryl-[protein] + phosphate. It catalyses the reaction O-phospho-L-threonyl-[protein] + H2O = L-threonyl-[protein] + phosphate. In terms of biological role, protein phosphatase that associates with over 200 regulatory proteins to form highly specific holoenzymes which dephosphorylate hundreds of biological targets. Protein phosphatase 1 (PP1) is essential for cell division, and participates in the regulation of glycogen metabolism, muscle contractility and protein synthesis. Promotes nuclear envelope reassembly by targeting nuclear membrane vesicles to chromatin at the end of mitosis. Acts by dephosphorylating membrane proteins such as lamin B receptor (lbr) to regulate the binding of membrane proteins to chromatin. In Xenopus laevis (African clawed frog), this protein is Serine/threonine-protein phosphatase PP1-gamma catalytic subunit B (ppp1cc-b).